The primary structure comprises 358 residues: GDSL esterase/lipase At2g30220 (358 aa).

Positions 1-22 are cleaved as a signal peptide; that stretch reads MYISKTIVFGLFVATLLVSCNA. Asparagine 25 carries N-linked (GlcNAc...) asparagine glycosylation. Serine 40 serves as the catalytic Nucleophile. Residues asparagine 102 and asparagine 324 are each glycosylated (N-linked (GlcNAc...) asparagine). Residues aspartate 332 and histidine 335 contribute to the active site.

The protein belongs to the 'GDSL' lipolytic enzyme family.

It localises to the secreted. The chain is GDSL esterase/lipase At2g30220 from Arabidopsis thaliana (Mouse-ear cress).